The chain runs to 302 residues: HTH-type transcriptional regulator GbpR (302 aa).

The HTH lysR-type domain occupies 1 to 56; that stretch reads MSHLRMLVMIEEHGQVSAAAAAMNMTQPAASRMLSEMEAIVKSPLCQRASRGVVLT. Positions 16 to 35 form a DNA-binding region, H-T-H motif; the sequence is VSAAAAAMNMTQPAASRMLS.

It belongs to the LysR transcriptional regulatory family.

Its function is as follows. Activator of the expression of chvE when bound to its inducer and represses its expression in the absence of inducer (L-arabinose, D-fucose or D-galactose). Negatively regulates its own expression. The polypeptide is HTH-type transcriptional regulator GbpR (gbpR) (Rhizobium radiobacter (Agrobacterium tumefaciens)).